The following is an 80-amino-acid chain: Acyl carrier protein (80 aa).

Positions 2-77 (KNIEERIKKI…KSIDFIQKKN (76 aa)) constitute a Carrier domain. S37 bears the O-(pantetheine 4'-phosphoryl)serine mark.

The protein belongs to the acyl carrier protein (ACP) family. In terms of processing, 4'-phosphopantetheine is transferred from CoA to a specific serine of apo-ACP by AcpS. This modification is essential for activity because fatty acids are bound in thioester linkage to the sulfhydryl of the prosthetic group.

Its subcellular location is the cytoplasm. It participates in lipid metabolism; fatty acid biosynthesis. Carrier of the growing fatty acid chain in fatty acid biosynthesis. This chain is Acyl carrier protein, found in Buchnera aphidicola subsp. Acyrthosiphon pisum (strain APS) (Acyrthosiphon pisum symbiotic bacterium).